The sequence spans 214 residues: Probable transaldolase (214 aa).

Residue Lys83 is the Schiff-base intermediate with substrate of the active site.

This sequence belongs to the transaldolase family. Type 3B subfamily.

The protein localises to the cytoplasm. The enzyme catalyses D-sedoheptulose 7-phosphate + D-glyceraldehyde 3-phosphate = D-erythrose 4-phosphate + beta-D-fructose 6-phosphate. It participates in carbohydrate degradation; pentose phosphate pathway; D-glyceraldehyde 3-phosphate and beta-D-fructose 6-phosphate from D-ribose 5-phosphate and D-xylulose 5-phosphate (non-oxidative stage): step 2/3. In terms of biological role, transaldolase is important for the balance of metabolites in the pentose-phosphate pathway. This Thermodesulfovibrio yellowstonii (strain ATCC 51303 / DSM 11347 / YP87) protein is Probable transaldolase.